The sequence spans 101 residues: Putative pterin-4-alpha-carbinolamine dehydratase (101 aa).

Belongs to the pterin-4-alpha-carbinolamine dehydratase family.

The catalysed reaction is (4aS,6R)-4a-hydroxy-L-erythro-5,6,7,8-tetrahydrobiopterin = (6R)-L-erythro-6,7-dihydrobiopterin + H2O. This chain is Putative pterin-4-alpha-carbinolamine dehydratase, found in Rhodopseudomonas palustris (strain BisA53).